Consider the following 259-residue polypeptide: Peroxisomal membrane protein 11B (259 aa).

K43 carries the post-translational modification N6-acetyllysine. Residues 211 to 259 (VVRNACDLFIPLDKLGLWRCGPGIVGLCGLVSSILSILTLIYPWLRLKP) are interaction with PEX19, PEX11G and FIS1 and peroxisome targeting. The helical transmembrane segment at 234–254 (IVGLCGLVSSILSILTLIYPW) threads the bilayer.

This sequence belongs to the peroxin-11 family. Homodimer. Heterodimer with PEX11G. Interacts with PEX19. Interacts with FIS1.

It is found in the peroxisome membrane. Involved in peroxisomal proliferation. May regulate peroxisome division by recruiting the dynamin-related GTPase DNM1L to the peroxisomal membrane. Promotes membrane protrusion and elongation on the peroxisomal surface. In Pongo abelii (Sumatran orangutan), this protein is Peroxisomal membrane protein 11B (PEX11B).